We begin with the raw amino-acid sequence, 273 residues long: Putative phosphoenolpyruvate synthase regulatory protein (273 aa).

Residue 153-160 (GVSRSGKT) participates in ADP binding.

Belongs to the pyruvate, phosphate/water dikinase regulatory protein family. PSRP subfamily.

It catalyses the reaction [pyruvate, water dikinase] + ADP = [pyruvate, water dikinase]-phosphate + AMP + H(+). It carries out the reaction [pyruvate, water dikinase]-phosphate + phosphate + H(+) = [pyruvate, water dikinase] + diphosphate. Functionally, bifunctional serine/threonine kinase and phosphorylase involved in the regulation of the phosphoenolpyruvate synthase (PEPS) by catalyzing its phosphorylation/dephosphorylation. The chain is Putative phosphoenolpyruvate synthase regulatory protein from Verminephrobacter eiseniae (strain EF01-2).